The following is a 489-amino-acid chain: Putative general secretion pathway protein A (489 aa).

26-33 contributes to the ATP binding site; sequence GEAGSGKT. The helical transmembrane segment at 237-257 threads the bilayer; it reads MQLAVVMSGTIIALTCGWLLL.

The protein belongs to the ExeA family.

The protein resides in the cell membrane. In terms of biological role, may play a regulatory role under conditions of derepressed gsp gene expression. This Escherichia coli (strain K12) protein is Putative general secretion pathway protein A (gspA).